A 345-amino-acid chain; its full sequence is Dihydroorotase (345 aa).

Residues histidine 13 and histidine 15 each coordinate Zn(2+). Substrate contacts are provided by residues 15 to 17 (HLR) and asparagine 41. Residues lysine 99, histidine 136, histidine 174, and aspartate 247 each coordinate Zn(2+). Position 99 is an N6-carboxylysine (lysine 99). A substrate-binding site is contributed by histidine 136. Aspartate 247 is a catalytic residue. Positions 251 and 263 each coordinate substrate.

The protein belongs to the metallo-dependent hydrolases superfamily. DHOase family. Class II DHOase subfamily. Homodimer. Zn(2+) is required as a cofactor.

It carries out the reaction (S)-dihydroorotate + H2O = N-carbamoyl-L-aspartate + H(+). It participates in pyrimidine metabolism; UMP biosynthesis via de novo pathway; (S)-dihydroorotate from bicarbonate: step 3/3. Functionally, catalyzes the reversible cyclization of carbamoyl aspartate to dihydroorotate. This Halorhodospira halophila (strain DSM 244 / SL1) (Ectothiorhodospira halophila (strain DSM 244 / SL1)) protein is Dihydroorotase.